The following is a 446-amino-acid chain: Putative RNA-ligase (446 aa).

Belongs to the asfivirus M448R family.

The protein localises to the virion. The polypeptide is Putative RNA-ligase (African swine fever virus (isolate Tick/Malawi/Lil 20-1/1983) (ASFV)).